A 289-amino-acid chain; its full sequence is Phosphatidylserine decarboxylase proenzyme (289 aa).

Catalysis depends on charge relay system; for autoendoproteolytic cleavage activity residues D89, H146, and S252. Residue S252 is the Schiff-base intermediate with substrate; via pyruvic acid; for decarboxylase activity of the active site. S252 carries the post-translational modification Pyruvic acid (Ser); by autocatalysis.

This sequence belongs to the phosphatidylserine decarboxylase family. PSD-B subfamily. Prokaryotic type I sub-subfamily. Heterodimer of a large membrane-associated beta subunit and a small pyruvoyl-containing alpha subunit. It depends on pyruvate as a cofactor. In terms of processing, is synthesized initially as an inactive proenzyme. Formation of the active enzyme involves a self-maturation process in which the active site pyruvoyl group is generated from an internal serine residue via an autocatalytic post-translational modification. Two non-identical subunits are generated from the proenzyme in this reaction, and the pyruvate is formed at the N-terminus of the alpha chain, which is derived from the carboxyl end of the proenzyme. The autoendoproteolytic cleavage occurs by a canonical serine protease mechanism, in which the side chain hydroxyl group of the serine supplies its oxygen atom to form the C-terminus of the beta chain, while the remainder of the serine residue undergoes an oxidative deamination to produce ammonia and the pyruvoyl prosthetic group on the alpha chain. During this reaction, the Ser that is part of the protease active site of the proenzyme becomes the pyruvoyl prosthetic group, which constitutes an essential element of the active site of the mature decarboxylase.

The protein resides in the cell membrane. It carries out the reaction a 1,2-diacyl-sn-glycero-3-phospho-L-serine + H(+) = a 1,2-diacyl-sn-glycero-3-phosphoethanolamine + CO2. Its pathway is phospholipid metabolism; phosphatidylethanolamine biosynthesis; phosphatidylethanolamine from CDP-diacylglycerol: step 2/2. Its function is as follows. Catalyzes the formation of phosphatidylethanolamine (PtdEtn) from phosphatidylserine (PtdSer). The polypeptide is Phosphatidylserine decarboxylase proenzyme (Shewanella putrefaciens (strain CN-32 / ATCC BAA-453)).